Reading from the N-terminus, the 114-residue chain is Acetyltransferase At1g77540 (114 aa).

Thr-2 is modified (N-acetylthreonine). One can recognise an N-acetyltransferase domain in the interval 18 to 106 (KIVWNEGKRR…RNPSWKPLIH (89 aa)). CoA is bound by residues 52–55 (HTYV) and 61–66 (GLGLAS). Catalysis depends on Cys-87, which acts as the Nucleophile. Residues 88-89 (SY), Thr-93, and Arg-97 each bind CoA.

The protein localises to the peroxisome. Its function is as follows. Possesses in vitro histone acetyltransferase activity with histones H3 and H4. This chain is Acetyltransferase At1g77540, found in Arabidopsis thaliana (Mouse-ear cress).